A 198-amino-acid chain; its full sequence is Alpha-S1-casein (198 aa).

Positions 1 to 15 (MKLLILTCLVASAVA) are cleaved as a signal peptide. Disordered regions lie at residues 28–47 (QTQR…LKEE) and 71–97 (SEST…EQKH). S39, S80, S81, S83, S84, and S85 each carry phosphoserine.

It belongs to the alpha-casein family. Mammary gland specific. Secreted in milk.

The protein resides in the secreted. Important role in the capacity of milk to transport calcium phosphate. In Cavia porcellus (Guinea pig), this protein is Alpha-S1-casein (CSN1S1).